The sequence spans 413 residues: Alpha-1-antitrypsin 1-4 (413 aa).

The signal sequence occupies residues 1–24; the sequence is MTPSISWSLLLLAGLCCLVPSFLA. Asn64, Asn101, and Asn265 each carry an N-linked (GlcNAc...) asparagine glycan. The segment at 368–387 is RCL; it reads AATVLQVATYSMPPIVRFDH.

This sequence belongs to the serpin family.

The protein localises to the secreted. In terms of biological role, inhibitor of serine proteases. Can inhibit trypsin and chymotrypsin; relatively ineffective against elastase. This is Alpha-1-antitrypsin 1-4 (Serpina1d) from Mus musculus (Mouse).